We begin with the raw amino-acid sequence, 64 residues long: Large ribosomal subunit protein bL35 (64 aa).

It belongs to the bacterial ribosomal protein bL35 family.

This Mycoplasmopsis pulmonis (strain UAB CTIP) (Mycoplasma pulmonis) protein is Large ribosomal subunit protein bL35.